A 397-amino-acid chain; its full sequence is Elongation factor Tu (397 aa).

A tr-type G domain is found at 10–206; the sequence is KPHVNVGTIG…TMDTYFPQPE (197 aa). The interval 19–26 is G1; that stretch reads GHVDHGKT. 19–26 provides a ligand contact to GTP; that stretch reads GHVDHGKT. Mg(2+) is bound at residue T26. The interval 60–64 is G2; sequence GITIA. Positions 81 to 84 are G3; it reads DCPG. Residues 81–85 and 136–139 each bind GTP; these read DCPGH and NKAD. The segment at 136-139 is G4; that stretch reads NKAD. The segment at 174–176 is G5; that stretch reads SAL.

Belongs to the TRAFAC class translation factor GTPase superfamily. Classic translation factor GTPase family. EF-Tu/EF-1A subfamily. As to quaternary structure, monomer.

The protein resides in the cytoplasm. The catalysed reaction is GTP + H2O = GDP + phosphate + H(+). Its function is as follows. GTP hydrolase that promotes the GTP-dependent binding of aminoacyl-tRNA to the A-site of ribosomes during protein biosynthesis. This chain is Elongation factor Tu, found in Coxiella burnetii (strain Dugway 5J108-111).